The following is a 344-amino-acid chain: MKLLSLFSGAGGLDLGFERAGFEIIVANEYDKTIWETYEKNHKAKLIKKDIREILSEELPKSDGIIGGPPCQSWSEAGSLRGINDPRGKLFYEYIRILKDIQPKFFLAENVKGMLSKRNTEAVKDIIKEFEEAGYNVFIKLLNAFDYGVAQDRERVFYVGFRKDLNISNFEFPYPISEKERKYLKDSIWDLKDNALPGKDKNKTNADDCIVENHEYLTGSYSTIFMSRNRVRQWEQPAFTVQASGRQCQLHPQAPTMIKIDKNMYKFVAGKENLYRRLSIRECARIQGFPDTFKFYYTSLEDGYKMVGNAVPVDLAYIIAKRIKETLTDKEKIKKEIRQKTLFD.

In terms of domain architecture, SAM-dependent MTase C5-type spans Met-1–Lys-330. The active site involves Cys-71.

Belongs to the class I-like SAM-binding methyltransferase superfamily. C5-methyltransferase family.

The enzyme catalyses a 2'-deoxycytidine in DNA + S-adenosyl-L-methionine = a 5-methyl-2'-deoxycytidine in DNA + S-adenosyl-L-homocysteine + H(+). In terms of biological role, a methylase, recognizes the double-stranded sequence 5'-GGCC-3', methylates C-? on both strands, and protects the DNA from cleavage by the FnuDI endonuclease. This Fusobacterium nucleatum protein is Type II methyltransferase M.FnuDI (fnuDIM).